Here is a 203-residue protein sequence, read N- to C-terminus: Eukaryotic translation initiation factor isoform 4E (203 aa).

Residues 1–25 (MATETAGAVVESSSAATVPSPAPEA) are compositionally biased toward low complexity. Residues 1 to 27 (MATETAGAVVESSSAATVPSPAPEAGS) are disordered. MRNA-binding positions include 47–52 (QGAAWG), Lys-79, and 97–98 (WE). Cys-102 and Cys-141 are joined by a disulfide. MRNA is bound at residue 148–153 (RQRQDK).

It belongs to the eukaryotic initiation factor 4E family. As to quaternary structure, EIF4F is a multi-subunit complex, the composition of which varies with external and internal environmental conditions. It is composed of at least EIF4A, EIF4E and EIF4G. EIF4E is also known to interact with other partners. In higher plants two isoforms of EIF4F have been identified, named isoform EIF4F and isoform EIF(iso)4F. Isoform EIF4F has subunits p220 and p26, whereas isoform EIF(iso)4F has subunits p82 and p28. (Microbial infection) Interacts with the potyvirus peanut stripe virus (PStV) helper component proteinase (HC-Pro) in the cytoplasm and with PStV viral genome-linked protein (VPg) in the nucleus; these interactions are possible in susceptible hosts but impaired in resistant plants. According to the redox status, the Cys-102-Cys-141 disulfide bridge may have a role in regulating protein function by affecting its ability to bind capped mRNA. As to expression, expressed ubiquitously with highest levels in young leaves and roots, and lowest levels in flowers.

The protein resides in the cytoplasm. It is found in the nucleus. In terms of biological role, component of the protein complex eIF4F, which is involved in the recognition of the mRNA cap, ATP-dependent unwinding of 5'-terminal secondary structure and recruitment of mRNA to the ribosome. Recognizes and binds the 7-methylguanosine-containing mRNA cap during an early step in the initiation of protein synthesis and facilitates ribosome binding by inducing the unwinding of the mRNAs secondary structures. Key component of recessive resistance to potyviruses such as peanut stripe virus (PStV). Functionally, (Microbial infection) Susceptibility host factor required for viral infection by recruiting viral RNAs to the host ribosomal complex via an interaction with viral genome-linked protein (VPg). This is Eukaryotic translation initiation factor isoform 4E from Arachis hypogaea (Peanut).